The following is a 385-amino-acid chain: UPF0284 protein A9601_04941 (385 aa).

The protein belongs to the UPF0284 family.

The sequence is that of UPF0284 protein A9601_04941 from Prochlorococcus marinus (strain AS9601).